Here is a 415-residue protein sequence, read N- to C-terminus: Squalene synthase 2 (415 aa).

2 helical membrane-spanning segments follow: residues 281 to 301 and 392 to 412; these read AIFR…ALCY and LIVI…SNLP.

This sequence belongs to the phytoene/squalene synthase family. Mg(2+) serves as cofactor. Requires Mn(2+) as cofactor.

It is found in the endoplasmic reticulum membrane. It catalyses the reaction 2 (2E,6E)-farnesyl diphosphate + NADH + H(+) = squalene + 2 diphosphate + NAD(+). The catalysed reaction is 2 (2E,6E)-farnesyl diphosphate + NADPH + H(+) = squalene + 2 diphosphate + NADP(+). The protein operates within terpene metabolism; lanosterol biosynthesis; lanosterol from farnesyl diphosphate: step 1/3. Component of the triterpene saponins (e.g. ginsenosides or panaxosides) and phytosterols biosynthetic pathways. Catalyzes the biosynthesis of squalene. In Panax ginseng (Korean ginseng), this protein is Squalene synthase 2.